Consider the following 429-residue polypeptide: Oxysterol-binding protein-like protein OBPalpha (429 aa).

The protein belongs to the OSBP family.

The sequence is that of Oxysterol-binding protein-like protein OBPalpha (OBPALPHA) from Candida albicans (strain SC5314 / ATCC MYA-2876) (Yeast).